The sequence spans 213 residues: MYPGRNFPPRRQNRRENVNESIRVREVRAVFPDGTTEVMPTAAALRKAQELGLDLVLIAPTAVPPVAKAVDFGHYQYDLKKKQHDARKKQHVVQVKELKFRPNTDDHDYDFKKKHAIRFLQEGNRVKAVVQFRGREIAHADLGKKLLMRFAADLTAYGTVEGMPRLEGRNAHVLISPVKTLIKSEKPEKPEKPEKSEKTEKQGPSTPPAPSAS.

The segment at 178–213 is disordered; sequence VKTLIKSEKPEKPEKPEKSEKTEKQGPSTPPAPSAS. Residues 182 to 201 are compositionally biased toward basic and acidic residues; the sequence is IKSEKPEKPEKPEKSEKTEK.

This sequence belongs to the IF-3 family. Monomer.

The protein localises to the cytoplasm. IF-3 binds to the 30S ribosomal subunit and shifts the equilibrium between 70S ribosomes and their 50S and 30S subunits in favor of the free subunits, thus enhancing the availability of 30S subunits on which protein synthesis initiation begins. In Solibacter usitatus (strain Ellin6076), this protein is Translation initiation factor IF-3.